The following is a 65-amino-acid chain: Neurotoxin BmK-M3 (65 aa).

The LCN-type CS-alpha/beta domain maps to 2 to 64 (RDAYIAKPEN…VPIRVWGKCH (63 aa)). Cystine bridges form between cysteine 12-cysteine 63, cysteine 16-cysteine 36, cysteine 22-cysteine 46, and cysteine 26-cysteine 48.

The protein belongs to the long (4 C-C) scorpion toxin superfamily. Sodium channel inhibitor family. Alpha subfamily. In terms of tissue distribution, expressed by the venom gland.

It is found in the secreted. Binds to sodium channels (Nav) and inhibits the inactivation of the activated channels, thereby blocking neuronal transmission. This Olivierus martensii (Manchurian scorpion) protein is Neurotoxin BmK-M3.